A 577-amino-acid polypeptide reads, in one-letter code: Isocitrate dehydrogenase kinase/phosphatase (577 aa).

Residues 324-330 and Lys-345 each bind ATP; that span reads APGIRGL. Asp-380 is an active-site residue.

It belongs to the AceK family.

Its subcellular location is the cytoplasm. It catalyses the reaction L-seryl-[isocitrate dehydrogenase] + ATP = O-phospho-L-seryl-[isocitrate dehydrogenase] + ADP + H(+). Its function is as follows. Bifunctional enzyme which can phosphorylate or dephosphorylate isocitrate dehydrogenase (IDH) on a specific serine residue. This is a regulatory mechanism which enables bacteria to bypass the Krebs cycle via the glyoxylate shunt in response to the source of carbon. When bacteria are grown on glucose, IDH is fully active and unphosphorylated, but when grown on acetate or ethanol, the activity of IDH declines drastically concomitant with its phosphorylation. This chain is Isocitrate dehydrogenase kinase/phosphatase, found in Pseudoalteromonas atlantica (strain T6c / ATCC BAA-1087).